A 155-amino-acid chain; its full sequence is Small ribosomal subunit protein uS7c (155 aa).

It belongs to the universal ribosomal protein uS7 family. In terms of assembly, part of the 30S ribosomal subunit.

It localises to the plastid. It is found in the chloroplast. In terms of biological role, one of the primary rRNA binding proteins, it binds directly to 16S rRNA where it nucleates assembly of the head domain of the 30S subunit. This Cryptomeria japonica (Japanese cedar) protein is Small ribosomal subunit protein uS7c (rps7).